Here is an 868-residue protein sequence, read N- to C-terminus: Phospholipase D delta (868 aa).

A C2 domain is found at 1 to 154; it reads MAEKVSEDVM…ASGERISGWF (154 aa). Ca(2+) is bound at residue D216. One can recognise a PLD phosphodiesterase 1 domain in the interval 368 to 403; it reads TLFTHHQKCVLVDTQAVGNNRKVTAFIGGLDLCDGR. Catalysis depends on residues H373, K375, and D380. An a 1,2-diacyl-sn-glycero-3-phosphate-binding site is contributed by H373. Residues H409 and H440 each coordinate Ca(2+). A 1,2-diacyl-sn-glycero-3-phosphate-binding residues include Q588 and H718. Positions 713–740 constitute a PLD phosphodiesterase 2 domain; that stretch reads FMIYVHAKGMIVDDEYVLMGSANINQRS. Catalysis depends on residues H718, K720, and D725. E781 is a Ca(2+) binding site.

It belongs to the phospholipase D family. C2-PLD subfamily. Interacts with GAPC1 and GAPC2. Increased interaction in the presence of H(2)O(2). The cofactor is Ca(2+). As to expression, expressed in roots, leaves, stems, siliques and flowers. Strongly expressed in the vascular tissues of cotyledons and leaves under dehydration stress conditions. Expression is higher in old leaves than in young leaves. Expressed in leaves and guard cells. The isoform 2 may not be present in siliques.

It localises to the cell membrane. It carries out the reaction a 1,2-diacyl-sn-glycero-3-phosphocholine + H2O = a 1,2-diacyl-sn-glycero-3-phosphate + choline + H(+). Activated by free oleic acid in a dose-dependent manner and less effectively by other unsaturated fatty acids such as linoleic and linolenic acids. Not activated by the saturated fatty acids stearic and palmitic acids. PIP2 and Ca(2+) stimulate activity by promoting lipid substrate binding to the active site. Activated by H(2)O(2) and by binding to GAPC. Its function is as follows. Hydrolyzes glycerol-phospholipids at the terminal phosphodiesteric bond to generate phosphatidic acids (PA). May be involved in PA accumulation in the dehydration stress response and in the transduction of hormonal and environmental signals to the microtubules cytoskeleton. Prefers phosphatidylethanolamine to phosphatidylcholine as substrate. Involved in H(2)O(2) and abscisic acid (ABA)-induced stomatal closure. Involved in nitric oxide (NO) signaling during stomatal closure. Plays a positive role in ABA-promoted senescence. Involved in basal defense and nonhost resistance. This chain is Phospholipase D delta, found in Arabidopsis thaliana (Mouse-ear cress).